Reading from the N-terminus, the 353-residue chain is Phosphoribosylformylglycinamidine cyclo-ligase (353 aa).

It belongs to the AIR synthase family.

The protein localises to the cytoplasm. The catalysed reaction is 2-formamido-N(1)-(5-O-phospho-beta-D-ribosyl)acetamidine + ATP = 5-amino-1-(5-phospho-beta-D-ribosyl)imidazole + ADP + phosphate + H(+). The protein operates within purine metabolism; IMP biosynthesis via de novo pathway; 5-amino-1-(5-phospho-D-ribosyl)imidazole from N(2)-formyl-N(1)-(5-phospho-D-ribosyl)glycinamide: step 2/2. This chain is Phosphoribosylformylglycinamidine cyclo-ligase, found in Dinoroseobacter shibae (strain DSM 16493 / NCIMB 14021 / DFL 12).